We begin with the raw amino-acid sequence, 245 residues long: Probable phosphatase YcdX (245 aa).

Positions 7, 9, 15, 40, 73, 101, 131, 192, and 194 each coordinate Zn(2+).

The protein belongs to the PHP family. Homotrimer. Zn(2+) is required as a cofactor.

This is Probable phosphatase YcdX from Salmonella arizonae (strain ATCC BAA-731 / CDC346-86 / RSK2980).